The sequence spans 586 residues: Protein cereblon (586 aa).

Disordered regions lie at residues 1 to 114 (MDDE…LPRW) and 158 to 194 (SQER…IDIG). The segment covering 14–37 (GRDEDVQLEDHSQAQGLQDRRVDA) has biased composition (basic and acidic residues). Residues 75–85 (MVEDGLQDDTA) show a composition bias toward acidic residues. The span at 86 to 96 (SEGSHPSSDMS) shows a compositional bias: polar residues. Residues 159–168 (QERRRSRTSE) show a composition bias toward basic and acidic residues. The span at 170 to 179 (TSQEDVEQPE) shows a compositional bias: acidic residues. Residues 180-190 (DPPPQQPPRPP) show a composition bias toward pro residues. Positions 226 to 452 (HMLIFLHQHI…LIKSTFTDES (227 aa)) constitute a Lon N-terminal domain. A CULT domain is found at 451–560 (ESLFFCRYCN…LAGSSVRIGK (110 aa)). Zn(2+) contacts are provided by Cys456, Cys459, Cys525, and Cys528.

Belongs to the CRBN family. Likely a component of a DCX (DDB1-CUL4-X-box) protein ligase complex. May interact with pic/DDB1. Post-translationally, ubiquitinated.

The protein localises to the nucleus. It participates in protein modification; protein ubiquitination. Functionally, substrate recognition component of a DCX (DDB1-CUL4-X-box) E3 protein ligase complex that mediates the ubiquitination and subsequent proteasomal degradation of target proteins. Has an essential role in mediating growth by negatively regulating insulin signaling. It also has a role in maintaining presynaptic function in the neuromuscular junction synapses of third-instar larvae. In Drosophila erecta (Fruit fly), this protein is Protein cereblon.